The following is a 316-amino-acid chain: tRNA dimethylallyltransferase (316 aa).

17-24 is a binding site for ATP; that stretch reads GPTASGKT. Position 19-24 (19-24) interacts with substrate; it reads TASGKT. Interaction with substrate tRNA stretches follow at residues 42–45, 166–170, and 247–252; these read DSAL, QRLSR, and RCVGYR.

The protein belongs to the IPP transferase family. As to quaternary structure, monomer. Mg(2+) serves as cofactor.

The enzyme catalyses adenosine(37) in tRNA + dimethylallyl diphosphate = N(6)-dimethylallyladenosine(37) in tRNA + diphosphate. Its function is as follows. Catalyzes the transfer of a dimethylallyl group onto the adenine at position 37 in tRNAs that read codons beginning with uridine, leading to the formation of N6-(dimethylallyl)adenosine (i(6)A). The chain is tRNA dimethylallyltransferase from Erwinia tasmaniensis (strain DSM 17950 / CFBP 7177 / CIP 109463 / NCPPB 4357 / Et1/99).